A 206-amino-acid polypeptide reads, in one-letter code: Recombination protein RecR (206 aa).

A C4-type zinc finger spans residues 58 to 73; the sequence is CENCHNISDTKVCEIC. Residues 81-176 form the Toprim domain; sequence QTICVVEDIR…IISTIARGIS (96 aa).

Belongs to the RecR family.

Its function is as follows. May play a role in DNA repair. It seems to be involved in an RecBC-independent recombinational process of DNA repair. It may act with RecF and RecO. This is Recombination protein RecR from Flavobacterium johnsoniae (strain ATCC 17061 / DSM 2064 / JCM 8514 / BCRC 14874 / CCUG 350202 / NBRC 14942 / NCIMB 11054 / UW101) (Cytophaga johnsonae).